The following is a 299-amino-acid chain: Lathosterol oxidase (299 aa).

A run of 3 helical transmembrane segments spans residues 32–52, 79–99, and 117–137; these read ISLL…CATL, FTVK…LLEL, and IHLM…IYWI. A Fatty acid hydroxylase domain is found at 124-252; sequence VSFLFFTDML…YFTLWDRIGG (129 aa). A Histidine box-1 motif is present at residues 138 to 143; that stretch reads HRGLHH. The Histidine box-2 signature appears at 151–155; it reads HKPHH. The chain crosses the membrane as a helical span at residues 186-206; that stretch reads VFPLHKVVYLGLYVLVNVWTI. The Histidine box-3 signature appears at 228 to 233; that stretch reads HHTDHH. Residue serine 253 is modified to Phosphoserine. The disordered stretch occupies residues 280 to 299; the sequence is FAENGCKGKKVGNGEFTKNK.

Belongs to the sterol desaturase family. Requires Fe cation as cofactor.

The protein localises to the endoplasmic reticulum membrane. The catalysed reaction is a Delta(7)-sterol + 2 Fe(II)-[cytochrome b5] + O2 + 2 H(+) = a Delta(5),Delta(7)-sterol + 2 Fe(III)-[cytochrome b5] + 2 H2O. The enzyme catalyses lathosterol + 2 Fe(II)-[cytochrome b5] + O2 + 2 H(+) = 7-dehydrocholesterol + 2 Fe(III)-[cytochrome b5] + 2 H2O. It catalyses the reaction 5alpha-cholesta-7,24-dien-3beta-ol + 2 Fe(II)-[cytochrome b5] + O2 + 2 H(+) = 7-dehydrodesmosterol + 2 Fe(III)-[cytochrome b5] + 2 H2O. It participates in steroid biosynthesis; cholesterol biosynthesis. In terms of biological role, catalyzes the penultimate step of the biosynthesis of cholesterol, the dehydrogenation of lathosterol into 7-dehydrocholesterol (7-DHC). Cholesterol is the major sterol component in mammalian membranes and a precursor for bile acid and steroid hormone synthesis. In addition to its essential role in cholesterol biosynthesis, it also indirectly regulates ferroptosis through the production of 7-DHC. By diverting the spread of damage caused by peroxyl radicals from the phospholipid components to its sterol nucleus, 7-DHC prevents this form of cell death. This is Lathosterol oxidase from Mus musculus (Mouse).